Reading from the N-terminus, the 209-residue chain is MVEPREQFFQDLLSAVDKQMDTVKNDIIDVMKEKTSFLVSFENFMERYDTMEKNIQDLQNKYEEMANNLVAVMADTKIQLGAIIAQLEIIMVNGTPLPAKKTTMKDATSLPPPNPNNEQSVFTNGSPTSGKIGETVKKNLTNAMFFTRSEWASSEPFRQKFLTPEIQAILDEQFANKTGIERLHAEGLYMWRTQFSDEQKKMVKEMMKK.

Positions 39-75 (VSFENFMERYDTMEKNIQDLQNKYEEMANNLVAVMAD) form a coiled coil. The tract at residues 103–131 (TMKDATSLPPPNPNNEQSVFTNGSPTSGK) is disordered. Polar residues predominate over residues 116–129 (NNEQSVFTNGSPTS).

Belongs to the asfivirus K205R family.

Its subcellular location is the host cytoplasm. Induces host endoplasmic reticulum stress and consequently activates autophagy and NF-kappa-B signaling pathway. In turn, may induce autophagy-mediated STING1 degradation and innate immune evasion. This is an uncharacterized protein from Ornithodoros (relapsing fever ticks).